Consider the following 229-residue polypeptide: Ribonuclease HII (229 aa).

The RNase H type-2 domain occupies 34-223 (WPVAGADEAG…LRKSEDGPEM (190 aa)). A divalent metal cation contacts are provided by aspartate 40, glutamate 41, and aspartate 131. Positions 209-229 (MSFRPLRKSEDGPEMDELIPE) are disordered. Positions 220-229 (GPEMDELIPE) are enriched in acidic residues.

It belongs to the RNase HII family. Mn(2+) serves as cofactor. The cofactor is Mg(2+).

The protein localises to the cytoplasm. It carries out the reaction Endonucleolytic cleavage to 5'-phosphomonoester.. Functionally, endonuclease that specifically degrades the RNA of RNA-DNA hybrids. The chain is Ribonuclease HII from Rhizobium etli (strain CIAT 652).